Reading from the N-terminus, the 86-residue chain is Progonadoliberin IIB (86 aa).

An N-terminal signal peptide occupies residues 1–24 (MVHICRLFVVMGMLMFLSVQFASS). Q25 carries the pyrrolidone carboxylic acid modification. G34 carries the glycine amide modification.

Belongs to the GnRH family. Olfactory bulbs, hypothalamus and telencephalon, midbrain and posterior brain areas.

Its subcellular location is the secreted. Stimulates the secretion of gonadotropins. This chain is Progonadoliberin IIB (gnrh2b), found in Carassius auratus (Goldfish).